The following is a 403-amino-acid chain: Non-structural maintenance of chromosomes element 4 homolog A (403 aa).

The span at M1–E45 shows a compositional bias: basic and acidic residues. 3 disordered regions span residues M1–S57, L194–T226, and S342–S403. Basic residues predominate over residues Q196–T206. Low complexity predominate over residues S342–A353. The span at D354–P363 shows a compositional bias: polar residues. Positions T384 to R393 are enriched in basic and acidic residues. A compositionally biased stretch (basic residues) spans R394–S403.

Belongs to the NSE4 family. In terms of assembly, interacts with SMC5, SMC6A or SMC6B. The SMC5-SMC6 complex is composed of the SMC5 and SMC6 heterodimer attached via their hinge domain and from the non-SMC subunit NSE4A or NSE4B. As to expression, expressed in seedlings, rosette leaves and floral buds.

The protein resides in the nucleus. Component of the SMC5-SMC6 complex, that promotes sister chromatid alignment after DNA damage and facilitates double-stranded DNA breaks (DSBs) repair via homologous recombination between sister chromatids. The chain is Non-structural maintenance of chromosomes element 4 homolog A (NSE4A) from Arabidopsis thaliana (Mouse-ear cress).